We begin with the raw amino-acid sequence, 83 residues long: uncharacterized protein (83 aa).

The segment at 15–36 (RLKNGRGNKTMSESDYNTSDSG) is disordered. The segment covering 21–35 (GNKTMSESDYNTSDS) has biased composition (polar residues).

This is an uncharacterized protein from Aedes vexans (Inland floodwater mosquito).